Here is a 205-residue protein sequence, read N- to C-terminus: RPW8-like protein 2 (205 aa).

The RPW8 domain maps to 1–153 (MPLTEIIAGA…IMGQPIDCII (153 aa)). A helical membrane pass occupies residues 7-23 (IAGAALGLALQILHEAI). Coiled-coil stretches lie at residues 70 to 92 (EDLK…LKRR) and 125 to 147 (ADIK…IMGQ).

Belongs to the plant RPW8 protein family.

It is found in the membrane. Probable disease resistance (R) protein. This chain is RPW8-like protein 2, found in Arabidopsis thaliana (Mouse-ear cress).